The chain runs to 366 residues: Class I histocompatibility antigen, Gogo-C*0202 alpha chain (366 aa).

The signal sequence occupies residues 1 to 24; the sequence is MRVMAPRTLILLLSGALALTETWA. Residues 25 to 114 form an alpha-1 region; that stretch reads GSHSMRYFYT…LRGYYNQSED (90 aa). Over 25–308 the chain is Extracellular; that stretch reads GSHSMRYFYT…EPSSQPTIPI (284 aa). Asn110 carries N-linked (GlcNAc...) asparagine glycosylation. The interval 115 to 206 is alpha-2; that stretch reads GSHTLQSMYG…ENGKETLQRA (92 aa). Intrachain disulfides connect Cys125–Cys188 and Cys227–Cys283. Positions 207–298 are alpha-3; the sequence is EPPKTHVTHH…GLPEPLTLRW (92 aa). The Ig-like C1-type domain occupies 209–297; sequence PKTHVTHHPL…EGLPEPLTLR (89 aa). The interval 299–308 is connecting peptide; sequence EPSSQPTIPI. The chain crosses the membrane as a helical span at residues 309-332; that stretch reads VGIVVGLAVLVVLAVLGAVVTAMM. At 333-366 the chain is on the cytoplasmic side; the sequence is CRRKSSGGKGGSCSQAACSNSAQGSDESLITCKA.

The protein belongs to the MHC class I family. As to quaternary structure, heterodimer of an alpha chain and a beta chain (beta-2-microglobulin).

It localises to the membrane. In terms of biological role, involved in the presentation of foreign antigens to the immune system. This chain is Class I histocompatibility antigen, Gogo-C*0202 alpha chain, found in Gorilla gorilla gorilla (Western lowland gorilla).